Here is a 162-residue protein sequence, read N- to C-terminus: Phosphopantetheine adenylyltransferase (162 aa).

Thr10 is a substrate binding site. Residues 10–11 (TF) and His18 each bind ATP. Residues Lys42, Met74, and Arg88 each coordinate substrate. ATP-binding positions include 89-91 (GLR), Glu99, and 124-130 (YAFLSST).

It belongs to the bacterial CoaD family. In terms of assembly, homohexamer. It depends on Mg(2+) as a cofactor.

Its subcellular location is the cytoplasm. It catalyses the reaction (R)-4'-phosphopantetheine + ATP + H(+) = 3'-dephospho-CoA + diphosphate. It functions in the pathway cofactor biosynthesis; coenzyme A biosynthesis; CoA from (R)-pantothenate: step 4/5. In terms of biological role, reversibly transfers an adenylyl group from ATP to 4'-phosphopantetheine, yielding dephospho-CoA (dPCoA) and pyrophosphate. This Aliivibrio fischeri (strain ATCC 700601 / ES114) (Vibrio fischeri) protein is Phosphopantetheine adenylyltransferase.